Here is a 348-residue protein sequence, read N- to C-terminus: Heat-inducible transcription repressor HrcA (348 aa).

The protein belongs to the HrcA family.

Functionally, negative regulator of class I heat shock genes (grpE-dnaK-dnaJ and groELS operons). Prevents heat-shock induction of these operons. The chain is Heat-inducible transcription repressor HrcA from Ruminiclostridium cellulolyticum (strain ATCC 35319 / DSM 5812 / JCM 6584 / H10) (Clostridium cellulolyticum).